Consider the following 346-residue polypeptide: Fe(3+) ions import ATP-binding protein FbpC 2 (346 aa).

Residues 2–234 (LELHRVSKSF…PNSEDIATFL (233 aa)) form the ABC transporter domain. ATP is bound at residue 34–41 (GPSGSGKT).

This sequence belongs to the ABC transporter superfamily. Fe(3+) ion importer (TC 3.A.1.10) family. As to quaternary structure, the complex is composed of two ATP-binding proteins (FbpC), two transmembrane proteins (FbpB) and a solute-binding protein (FbpA).

The protein resides in the cell inner membrane. It carries out the reaction Fe(3+)(out) + ATP + H2O = Fe(3+)(in) + ADP + phosphate + H(+). In terms of biological role, part of the ABC transporter complex FbpABC involved in Fe(3+) ions import. Responsible for energy coupling to the transport system. This chain is Fe(3+) ions import ATP-binding protein FbpC 2, found in Pectobacterium atrosepticum (strain SCRI 1043 / ATCC BAA-672) (Erwinia carotovora subsp. atroseptica).